Reading from the N-terminus, the 1089-residue chain is Importin subunit beta-3 (1089 aa).

The residue at position 2 (S2) is an N-acetylserine. HEAT repeat units follow at residues 6–39, 44–78, 96–129, 138–165, 175–207, 216–252, 260–295, 304–359, 361–395, 399–439, 441–481, 484–524, 526–568, 571–613, 615–689, 692–735, 742–781, 788–849, 852–890, 898–930, 938–978, 986–1017, 1028–1063, and 1066–1089; these read EEVN…EEWI, IEYL…ALKA, KEVL…IAEC, PELL…ILTT, INSI…YFKQ, LGIL…LVEL, MFDQ…FSEN, QNYG…ALKL, GEYL…SSAA, ADVL…STDF, PFIQ…FSEF, KDIL…AEAA, NKFI…GFAV, EKFH…CRIL, DDFV…ATLL, QFAV…LLAA, ELVL…IKVM, EDQL…LKTT, HYLK…IQYG, KNAF…CAQY, VCIP…LYAY, DTYT…QLIE, NISA…LLGF, and SSDA…KWFA. T830 carries the phosphothreonine modification.

The protein belongs to the importin beta family. Importin beta-3 subfamily. As to quaternary structure, interacts with Ran (GSP1); interacts specifically with the GTP-bound form of Ran (GTP-Ran), protecting it from GTP hydrolysis and nucleotide exchange. Interacts with RPL25; this interaction is dissociated by binding to Ran-GTP. Interacts with YAP1; this interaction is dissociated by binding to Ran-GTP. Interacts with NOP1; via its rg-NLS. Interacts with SOF1; via its cNLS. Interacts with histones H3 and H4; via their NLS. Interacts with ABF1.

Its subcellular location is the cytoplasm. The protein localises to the nucleus. Its function is as follows. Functions in nuclear protein import as nuclear transport receptor. Serves as receptor for classical and arginine/glycine-rich nuclear localization signals (cNLS and rg-NLS) in cargo substrates. Its predominant cargo substrate seems to be ribosomal proteins and ribosome biogenesis trans- and cis-acting factors. Required for nuclear transport of YAP1, NOP1 and SOF1. Mediates the nuclear import of histones H3 and H4. Mediates docking of the importin/substrate complex to the nuclear pore complex (NPC) through binding to repeat-containing nucleoporins. The complex is subsequently translocated through the pore by an energy requiring, Ran-dependent mechanism. At the nucleoplasmic side of the NPC, GTP-Ran binding leads to release of the cargo. The importin is re-exported from the nucleus to the cytoplasm where GTP hydrolysis releases Ran from importin. The directionality of nuclear import is thought to be conferred by an asymmetric distribution of the GTP- and GDP-bound forms of Ran between the cytoplasm and nucleus. In terms of biological role, plays a role in protein secretion. This is Importin subunit beta-3 from Saccharomyces cerevisiae (strain ATCC 204508 / S288c) (Baker's yeast).